The sequence spans 97 residues: Secreted transmembrane peptide 4 (97 aa).

The first 33 residues, 1–33 (MTKNMTKKKMGLMSPNIAAFVLPMLLVLFTISS), serve as a signal peptide directing secretion. The SCOOP motif motif lies at 54 to 67 (IVFTPPSSSCGGSP). The short motif at 60-62 (SSS) is the SxS motif essential for MIK2 binding element. Residues 75 to 97 (WMPRRPCRRTRPPGTNIPVSQSP) form a disordered region.

The protein belongs to the serine rich endogenous peptide (SCOOP) phytocytokine family. Interacts with MIK2 (via extracellular leucine-rich repeat domain); this interaction triggers the formation of complex between MIK2 and the BAK1/SERK3 and SERK4 coreceptors, and subsequent BAK1 activation by phosphorylation. In terms of tissue distribution, mostly expressed in leaves and stems, and, to a lower extent, in roots, siliques, seeds and flowers.

Its subcellular location is the cell membrane. The protein localises to the secreted. It is found in the extracellular space. It localises to the apoplast. Functionally, brassicaceae-specific phytocytokine (plant endogenous peptide released into the apoplast) perceived by MIK2 in a BAK1/SERK3 and SERK4 coreceptors-dependent manner, that modulates various physiological and antimicrobial processes including growth prevention and reactive oxygen species (ROS) response regulation. Prevents general growth and development. This chain is Secreted transmembrane peptide 4, found in Arabidopsis thaliana (Mouse-ear cress).